A 1694-amino-acid polypeptide reads, in one-letter code: Clathrin heavy chain (1694 aa).

Positions 1–478 (MTNLPIRFQE…HDRKLALSIY (478 aa)) are globular terminal domain. WD40-like repeat regions lie at residues 23-67 (SIGF…KQMK), 68-107 (TDAA…MQEP), 108-149 (LEFW…PDLQ), 150-195 (NTEI…QSIE), 196-256 (GHAA…EIGA), 257-300 (SDFP…ISNE), and 301-329 (NIFV…VSID). The interval 448-464 (EKWLTEDKLECSEQLGD) is binding site for the uncoating ATPase, involved in lattice disassembly. A flexible linker region spans residues 479-522 (YRANASDKVITLFAETGEFDKIIAYCKKFNYKPDFMFLLQRMAN). The segment at 523–1694 (ANPMGAADFA…QQNYNQYGGF (1172 aa)) is heavy chain arm. CHCR repeat units follow at residues 537–681 (KEEG…QNLQ), 687–829 (AVSY…QEDY), 834–973 (IMSV…SLID), 980–1125 (LPES…VKEC), 1129–1270 (FIKA…FRLA), 1275–1421 (INII…LLIN), and 1424–1567 (LSVL…NSAF). An involved in binding clathrin light chain region spans residues 1214-1523 (AAKVLYTNIS…YLYKKNNRWA (310 aa)). A trimerization region spans residues 1551–1694 (GEELLQYFVD…QQNYNQYGGF (144 aa)). A coiled-coil region spans residues 1610–1640 (KVDQLVDDFKARQKKTEEEKEQQNIESSQYQ).

It belongs to the clathrin heavy chain family. In terms of assembly, clathrin coats are formed from molecules containing 3 heavy chains and 3 light chains.

The protein resides in the cytoplasmic vesicle membrane. Its subcellular location is the membrane. It is found in the coated pit. Functionally, clathrin is the major protein of the polyhedral coat of coated pits and vesicles. This chain is Clathrin heavy chain (chcA), found in Dictyostelium discoideum (Social amoeba).